A 284-amino-acid polypeptide reads, in one-letter code: Ribosomal RNA small subunit methyltransferase A (284 aa).

The S-adenosyl-L-methionine site is built by H12, L14, G47, E68, D93, and N118.

The protein belongs to the class I-like SAM-binding methyltransferase superfamily. rRNA adenine N(6)-methyltransferase family. RsmA subfamily.

It localises to the cytoplasm. It carries out the reaction adenosine(1518)/adenosine(1519) in 16S rRNA + 4 S-adenosyl-L-methionine = N(6)-dimethyladenosine(1518)/N(6)-dimethyladenosine(1519) in 16S rRNA + 4 S-adenosyl-L-homocysteine + 4 H(+). Functionally, specifically dimethylates two adjacent adenosines (A1518 and A1519) in the loop of a conserved hairpin near the 3'-end of 16S rRNA in the 30S particle. May play a critical role in biogenesis of 30S subunits. This Synechocystis sp. (strain ATCC 27184 / PCC 6803 / Kazusa) protein is Ribosomal RNA small subunit methyltransferase A.